The following is a 265-amino-acid chain: 2-Cys peroxiredoxin BAS1, chloroplastic (265 aa).

A chloroplast-targeting transit peptide spans 1–65 (MACVASSTTL…SSTSRRSFAV (65 aa)). In terms of domain architecture, Thioredoxin spans 73–232 (PLVGNKAPDF…TMRTLQALQY (160 aa)). Cys-119 functions as the Cysteine sulfenic acid (-SOH) intermediate in the catalytic mechanism.

This sequence belongs to the peroxiredoxin family. AhpC/Prx1 subfamily. Homodimer; disulfide-linked, upon oxidation.

Its subcellular location is the plastid. The protein localises to the chloroplast. The enzyme catalyses a hydroperoxide + [thioredoxin]-dithiol = an alcohol + [thioredoxin]-disulfide + H2O. Thiol-specific peroxidase that catalyzes the reduction of hydrogen peroxide and organic hydroperoxides to water and alcohols, respectively. Plays a role in cell protection against oxidative stress by detoxifying peroxides. May be an antioxidant enzyme particularly in the developing shoot and photosynthesizing leaf. The sequence is that of 2-Cys peroxiredoxin BAS1, chloroplastic (BAS1) from Spinacia oleracea (Spinach).